The primary structure comprises 453 residues: Cytochrome b-c1 complex subunit 2, mitochondrial (453 aa).

Residues Met-1–Tyr-14 constitute a mitochondrion transit peptide. An N6-acetyllysine mark is found at Lys-66, Lys-199, and Lys-250.

The protein belongs to the peptidase M16 family. UQCRC2/QCR2 subfamily. Component of the ubiquinol-cytochrome c oxidoreductase (cytochrome b-c1 complex, complex III, CIII), a multisubunit enzyme composed of 11 subunits. The complex is composed of 3 respiratory subunits cytochrome b, cytochrome c1 and Rieske protein UQCRFS1, 2 core protein subunits UQCRC1/QCR1 and UQCRC2/QCR2, and 6 low-molecular weight protein subunits UQCRH/QCR6, UQCRB/QCR7, UQCRQ/QCR8, UQCR10/QCR9, UQCR11/QCR10 and subunit 9, the cleavage product of Rieske protein UQCRFS1. The complex exists as an obligatory dimer and forms supercomplexes (SCs) in the inner mitochondrial membrane with NADH-ubiquinone oxidoreductase (complex I, CI) and cytochrome c oxidase (complex IV, CIV), resulting in different assemblies (supercomplex SCI(1)III(2)IV(1) and megacomplex MCI(2)III(2)IV(2)). Interacts with RAB5IF. Interacts with STMP1.

Its subcellular location is the mitochondrion inner membrane. Its function is as follows. Component of the ubiquinol-cytochrome c oxidoreductase, a multisubunit transmembrane complex that is part of the mitochondrial electron transport chain which drives oxidative phosphorylation. The respiratory chain contains 3 multisubunit complexes succinate dehydrogenase (complex II, CII), ubiquinol-cytochrome c oxidoreductase (cytochrome b-c1 complex, complex III, CIII) and cytochrome c oxidase (complex IV, CIV), that cooperate to transfer electrons derived from NADH and succinate to molecular oxygen, creating an electrochemical gradient over the inner membrane that drives transmembrane transport and the ATP synthase. The cytochrome b-c1 complex catalyzes electron transfer from ubiquinol to cytochrome c, linking this redox reaction to translocation of protons across the mitochondrial inner membrane, with protons being carried across the membrane as hydrogens on the quinol. In the process called Q cycle, 2 protons are consumed from the matrix, 4 protons are released into the intermembrane space and 2 electrons are passed to cytochrome c. The 2 core subunits UQCRC1/QCR1 and UQCRC2/QCR2 are homologous to the 2 mitochondrial-processing peptidase (MPP) subunits beta-MPP and alpha-MPP respectively, and they seem to have preserved their MPP processing properties. May be involved in the in situ processing of UQCRFS1 into the mature Rieske protein and its mitochondrial targeting sequence (MTS)/subunit 9 when incorporated into complex III. The sequence is that of Cytochrome b-c1 complex subunit 2, mitochondrial (UQCRC2) from Bos taurus (Bovine).